The chain runs to 36 residues: MVHFIFIALRSMRFMRRLVRNLQYLLLPITSSLLFI.

Its subcellular location is the mitochondrion. This is an uncharacterized protein from Saccharomyces cerevisiae (strain ATCC 204508 / S288c) (Baker's yeast).